We begin with the raw amino-acid sequence, 439 residues long: Microfibrillar-associated protein 1A (439 aa).

The segment at 1 to 200 (MSVPSALMKQ…SEDEMEPRLK (200 aa)) is disordered. The residue at position 2 (serine 2) is an N-acetylserine. Basic and acidic residues predominate over residues 23–34 (RNEKGEISMEKV). A phosphoserine mark is found at serine 52 and serine 53. Residues 61-70 (QFIKKAKEQE) are compositionally biased toward basic and acidic residues. A Glycyl lysine isopeptide (Lys-Gly) (interchain with G-Cter in SUMO2) cross-link involves residue lysine 67. Residues 71-81 (AEPEEQEEDSS) are compositionally biased toward acidic residues. Phosphoserine occurs at positions 94, 116, 118, 132, and 133. 2 stretches are compositionally biased toward acidic residues: residues 112 to 122 (VVGESDSEVEG) and 131 to 144 (DSSE…DDEE). A compositionally biased stretch (basic and acidic residues) spans 145 to 163 (IERRRGMMRQRAQERKNEE). Residues 178–195 (ESESESEYEEYTDSEDEM) are compositionally biased toward acidic residues. A Glycyl lysine isopeptide (Lys-Gly) (interchain with G-Cter in SUMO2) cross-link involves residue lysine 249. Residue threonine 267 is modified to Phosphothreonine. A Glycyl lysine isopeptide (Lys-Gly) (interchain with G-Cter in SUMO2) cross-link involves residue lysine 357. Serine 361 carries the phosphoserine modification. Glycyl lysine isopeptide (Lys-Gly) (interchain with G-Cter in SUMO2) cross-links involve residues lysine 371, lysine 381, lysine 415, and lysine 418. Phosphoserine is present on serine 432.

The protein belongs to the MFAP1 family. Component of the spliceosome B complex. Interacts with PRPF38A (via N-terminal interaction domain).

It localises to the nucleus. Involved in pre-mRNA splicing as a component of the spliceosome. The sequence is that of Microfibrillar-associated protein 1A from Mus musculus (Mouse).